Consider the following 553-residue polypeptide: Chaperonin GroEL (553 aa).

ATP is bound by residues T30–P33, K51, D87–T91, G416, and D496.

The protein belongs to the chaperonin (HSP60) family. In terms of assembly, forms a cylinder of 14 subunits composed of two heptameric rings stacked back-to-back. Interacts with the co-chaperonin GroES.

The protein localises to the cytoplasm. It catalyses the reaction ATP + H2O + a folded polypeptide = ADP + phosphate + an unfolded polypeptide.. Its function is as follows. Together with its co-chaperonin GroES, plays an essential role in assisting protein folding. The GroEL-GroES system forms a nano-cage that allows encapsulation of the non-native substrate proteins and provides a physical environment optimized to promote and accelerate protein folding. The polypeptide is Chaperonin GroEL (Alkalilimnicola ehrlichii (strain ATCC BAA-1101 / DSM 17681 / MLHE-1)).